The sequence spans 405 residues: Tryptophan synthase beta chain (405 aa).

Position 98 is an N6-(pyridoxal phosphate)lysine (Lys-98).

Belongs to the TrpB family. In terms of assembly, tetramer of two alpha and two beta chains. Requires pyridoxal 5'-phosphate as cofactor.

The enzyme catalyses (1S,2R)-1-C-(indol-3-yl)glycerol 3-phosphate + L-serine = D-glyceraldehyde 3-phosphate + L-tryptophan + H2O. The protein operates within amino-acid biosynthesis; L-tryptophan biosynthesis; L-tryptophan from chorismate: step 5/5. The beta subunit is responsible for the synthesis of L-tryptophan from indole and L-serine. This chain is Tryptophan synthase beta chain, found in Xanthomonas oryzae pv. oryzae (strain PXO99A).